A 478-amino-acid chain; its full sequence is Stromelysin-1 (478 aa).

The N-terminal stretch at 1–17 is a signal peptide; that stretch reads MKTLPTLLLLCVALCSA. The propeptide at 18–100 is activation peptide; the sequence is YPLDGASRDA…PRCGVPDVGH (83 aa). The short motif at 91 to 98 is the Cysteine switch element; the sequence is PRCGVPDV. Position 93 (Cys-93) interacts with Zn(2+). Ca(2+)-binding residues include Asp-125 and Asp-159. Zn(2+) is bound by residues His-169 and Asp-171. 4 residues coordinate Ca(2+): Asp-176, Gly-177, Gly-179, and Val-181. His-184 provides a ligand contact to Zn(2+). Ca(2+) is bound by residues Gly-191, Asn-193, and Asp-195. His-197 is a binding site for Zn(2+). The Ca(2+) site is built by Asp-199, Asp-200, and Glu-202. His-219 serves as a coordination point for Zn(2+). Glu-220 is an active-site residue. Positions 223 and 229 each coordinate Zn(2+). Hemopexin repeat units follow at residues 288-337, 338-384, 386-434, and 435-478; these read PVMC…WPSL, PSAV…GFPS, IRKI…FPGI, and NPKI…WFQC. A disulfide bond links Cys-291 and Cys-478. Position 298 (Asp-298) interacts with Ca(2+). 2 residues coordinate Ca(2+): Asp-390 and Asp-439.

This sequence belongs to the peptidase M10A family. Ca(2+) serves as cofactor. Requires Zn(2+) as cofactor.

Its subcellular location is the secreted. It is found in the extracellular space. The protein localises to the extracellular matrix. The enzyme catalyses Preferential cleavage where P1', P2' and P3' are hydrophobic residues.. Its function is as follows. Metalloproteinase with a rather broad substrate specificity that can degrade fibronectin, laminin, gelatins of type I, III, IV, and V; collagens III, IV, X, and IX, and cartilage proteoglycans. Activates different molecules including growth factors, plasminogen or other matrix metalloproteinases such as MMP9. Once released into the extracellular matrix (ECM), the inactive pro-enzyme is activated by the plasmin cascade signaling pathway. Also acts intracellularly. For example, in dopaminergic neurons, gets activated by the serine protease HTRA2 upon stress and plays a pivotal role in DA neuronal degeneration by mediating microglial activation and alpha-synuclein/SNCA cleavage. In addition, plays a role in immune response and possesses antiviral activity against various viruses. Mechanistically, translocates from the cytoplasm into the cell nucleus upon virus infection to influence NF-kappa-B activities. In Oryctolagus cuniculus (Rabbit), this protein is Stromelysin-1 (MMP3).